Reading from the N-terminus, the 41-residue chain is Large ribosomal subunit protein bL36 (41 aa).

The protein belongs to the bacterial ribosomal protein bL36 family.

This Brucella abortus (strain S19) protein is Large ribosomal subunit protein bL36.